Consider the following 164-residue polypeptide: Large ribosomal subunit protein eL24z (164 aa).

The segment covering 117 to 133 (ERIKKTKDEKKAKKVEY) has biased composition (basic and acidic residues). Positions 117-164 (ERIKKTKDEKKAKKVEYASKQQKSQVKGNIPKSAAPKAAKMGGGGGRR) are disordered.

Belongs to the eukaryotic ribosomal protein eL24 family. In terms of assembly, interacts with the cauliflower mosaic virus transactivator TAV to form a TAV/60S complex. Interacts with REIL1 AND REIL2.

Its function is as follows. Might have an extraribosomal function in reinitiation of translation. The chain is Large ribosomal subunit protein eL24z (RPL24A) from Arabidopsis thaliana (Mouse-ear cress).